Reading from the N-terminus, the 485-residue chain is Probable outer membrane usher protein LpfC' (485 aa).

This sequence belongs to the fimbrial export usher family.

It is found in the cell outer membrane. In terms of biological role, part of the lpfABCC'DE fimbrial operon. LP fimbriae may participate in the interaction with eukaryotic cells by assisting in microcolony formation. Could be involved in the export and assembly of the fimbrial subunits across the outer membrane. The chain is Probable outer membrane usher protein LpfC' (lpfC') from Escherichia coli O157:H7.